The following is a 135-amino-acid chain: Envelope glycoprotein N (135 aa).

The signal sequence occupies residues 1 to 19; sequence MEWNTLVLGLLVLSVVASS. The Virion surface segment spans residues 20–98; sequence NNTSTASTPR…SHMYELSLSS (79 aa). Residues 21–68 show a composition bias toward low complexity; the sequence is NTSTASTPRPSSSTHASTTVKATTVATTSTTTATSTSSTTSAKPGSTT. The disordered stretch occupies residues 21 to 73; sequence NTSTASTPRPSSSTHASTTVKATTVATTSTTTATSTSSTTSAKPGSTTHDPNV. The chain crosses the membrane as a helical span at residues 99–119; the sequence is FAAWWTMLNALILMGAFCIVL. The Intravirion segment spans residues 120–135; sequence RHCCFQNFTATTTKGY.

It belongs to the herpesviridae glycoprotein N family. Interacts (via N-terminus) with gM (via N-terminus). The gM-gN heterodimer forms the gCII complex. Post-translationally, O-glycosylated.

The protein localises to the virion membrane. It localises to the host membrane. It is found in the host Golgi apparatus. The protein resides in the host trans-Golgi network. Envelope glycoprotein necessary for proper maturation of gM and modulation of its membrane fusion activity. Also plays a critical role in virion morphogenesis. This is Envelope glycoprotein N from Homo sapiens (Human).